A 79-amino-acid chain; its full sequence is Sulfur carrier protein TusA (79 aa).

The Cysteine persulfide intermediate role is filled by Cys16.

This sequence belongs to the sulfur carrier protein TusA family.

The protein resides in the cytoplasm. Sulfur carrier protein which probably makes part of a sulfur-relay system. The chain is Sulfur carrier protein TusA from Pseudomonas paraeruginosa (strain DSM 24068 / PA7) (Pseudomonas aeruginosa (strain PA7)).